The sequence spans 204 residues: FMN-dependent NADH:quinone oxidoreductase 1 (204 aa).

Residues S10 and 15–17 (SLS) contribute to the FMN site.

This sequence belongs to the azoreductase type 1 family. Homodimer. FMN is required as a cofactor.

It carries out the reaction 2 a quinone + NADH + H(+) = 2 a 1,4-benzosemiquinone + NAD(+). The catalysed reaction is N,N-dimethyl-1,4-phenylenediamine + anthranilate + 2 NAD(+) = 2-(4-dimethylaminophenyl)diazenylbenzoate + 2 NADH + 2 H(+). Quinone reductase that provides resistance to thiol-specific stress caused by electrophilic quinones. In terms of biological role, also exhibits azoreductase activity. Catalyzes the reductive cleavage of the azo bond in aromatic azo compounds to the corresponding amines. The sequence is that of FMN-dependent NADH:quinone oxidoreductase 1 from Rhizobium etli (strain ATCC 51251 / DSM 11541 / JCM 21823 / NBRC 15573 / CFN 42).